The primary structure comprises 336 residues: Large ribosomal subunit protein uL3 (336 aa).

3 disordered regions span residues 1–43 (MPQP…QGFA), 205–230 (ITKG…HARQ), and 311–336 (RPAV…SNQG). Residues 219–230 (GVQKRKGKHARQ) are compositionally biased toward basic residues.

Belongs to the universal ribosomal protein uL3 family. Part of the 50S ribosomal subunit. Forms a cluster with proteins L14 and L24e.

Functionally, one of the primary rRNA binding proteins, it binds directly near the 3'-end of the 23S rRNA, where it nucleates assembly of the 50S subunit. This Natronomonas pharaonis (strain ATCC 35678 / DSM 2160 / CIP 103997 / JCM 8858 / NBRC 14720 / NCIMB 2260 / Gabara) (Halobacterium pharaonis) protein is Large ribosomal subunit protein uL3.